The sequence spans 393 residues: MQQTKKLTHSDITIAVMSGPFLQRGEPALVSKWYRTKMALACGVDLVVELPYAFSTQKAETFANGAISILNALHVSEICFGSEDGQIENFYNTISVQKNEEETFNRLVKQFMNAGNSYAKATSEAFLHILSSEKNIDMSQPNNILGFQYIKAILMQNSSMQAQTIKRFASHYHDETFNDQHIASATSIRKQLFSENSSFTEIEPFIPKATASLLASYKQNYGTLHNWEQYFSFFKYKLMTMSPEDLRHIYEIEEGLEHRILSKIQTSSSFHSFMEALKTKRYTWTRLQRACTHILTNTTKEEIHCANIEQHAPYIRLLGMSQKGQTYLSKNKKKIELPILTHTKTFDHPTLHIDRKANSVYFSIIQEPLRTQLLKQDATHHPIRYDETTAKFL.

Residues Gly81, Asn142, and Arg167 each contribute to the ATP site.

Belongs to the TmcAL family.

Its subcellular location is the cytoplasm. The enzyme catalyses cytidine(34) in elongator tRNA(Met) + acetate + ATP = N(4)-acetylcytidine(34) in elongator tRNA(Met) + AMP + diphosphate. In terms of biological role, catalyzes the formation of N(4)-acetylcytidine (ac(4)C) at the wobble position of elongator tRNA(Met), using acetate and ATP as substrates. First activates an acetate ion to form acetyladenylate (Ac-AMP) and then transfers the acetyl group to tRNA to form ac(4)C34. The polypeptide is tRNA(Met) cytidine acetate ligase (Bacillus cereus (strain ATCC 10987 / NRS 248)).